A 249-amino-acid chain; its full sequence is Ubiquinone/menaquinone biosynthesis C-methyltransferase UbiE (249 aa).

S-adenosyl-L-methionine contacts are provided by residues threonine 72, aspartate 93, and 121–122; that span reads DA.

It belongs to the class I-like SAM-binding methyltransferase superfamily. MenG/UbiE family.

The enzyme catalyses a 2-demethylmenaquinol + S-adenosyl-L-methionine = a menaquinol + S-adenosyl-L-homocysteine + H(+). It carries out the reaction a 2-methoxy-6-(all-trans-polyprenyl)benzene-1,4-diol + S-adenosyl-L-methionine = a 5-methoxy-2-methyl-3-(all-trans-polyprenyl)benzene-1,4-diol + S-adenosyl-L-homocysteine + H(+). Its pathway is quinol/quinone metabolism; menaquinone biosynthesis; menaquinol from 1,4-dihydroxy-2-naphthoate: step 2/2. It functions in the pathway cofactor biosynthesis; ubiquinone biosynthesis. Functionally, methyltransferase required for the conversion of demethylmenaquinol (DMKH2) to menaquinol (MKH2) and the conversion of 2-polyprenyl-6-methoxy-1,4-benzoquinol (DDMQH2) to 2-polyprenyl-3-methyl-6-methoxy-1,4-benzoquinol (DMQH2). This Teredinibacter turnerae (strain ATCC 39867 / T7901) protein is Ubiquinone/menaquinone biosynthesis C-methyltransferase UbiE.